The sequence spans 122 residues: Large ribosomal subunit protein uL14c (122 aa).

Belongs to the universal ribosomal protein uL14 family. As to quaternary structure, part of the 50S ribosomal subunit.

It localises to the plastid. The protein localises to the chloroplast. Binds to 23S rRNA. This Mesostigma viride (Green alga) protein is Large ribosomal subunit protein uL14c.